A 279-amino-acid chain; its full sequence is Polyamine aminopropyltransferase (279 aa).

One can recognise a PABS domain in the interval 4-237 (IEWYPRGYGV…SPWAFLVGIK (234 aa)). Gln29 provides a ligand contact to S-methyl-5'-thioadenosine. Spermidine is bound by residues His60 and Asp84. S-methyl-5'-thioadenosine is bound by residues Glu104 and 141–142 (DG). Asp158 (proton acceptor) is an active-site residue. Spermidine is bound at residue 158–161 (DSTD). Residue Pro165 participates in S-methyl-5'-thioadenosine binding.

This sequence belongs to the spermidine/spermine synthase family. Homodimer or homotetramer.

Its subcellular location is the cytoplasm. The enzyme catalyses S-adenosyl 3-(methylsulfanyl)propylamine + putrescine = S-methyl-5'-thioadenosine + spermidine + H(+). The protein operates within amine and polyamine biosynthesis; spermidine biosynthesis; spermidine from putrescine: step 1/1. Catalyzes the irreversible transfer of a propylamine group from the amino donor S-adenosylmethioninamine (decarboxy-AdoMet) to putrescine (1,4-diaminobutane) to yield spermidine. This chain is Polyamine aminopropyltransferase, found in Pyrococcus abyssi (strain GE5 / Orsay).